The following is an 822-amino-acid chain: MPTVISASVAPRTGAEPMSPGPIAQAAQDKGTEAGGGNPSGIYSAIISRNFPIIGVKEKTFEQLHKKCLEKKVLFVDPEFPPDETSLFYSQKFPIQFVWKRPPEICENPRFIVGGANRTDICQGDLGDCWFLAAIACLTLNKRLLFRVIPHDQSFTENYAGIFHFQFWRYGDWVDVVIDDCLPTYNNQLVFTKSNHRNEFWNALLEKAYAKLHGSYEALKGGNTTEAMEDFTGGVTEFFEIKDAPRDMYKIMKKAIERGSLMGCSIDDGTNMTYGTSPSGLKMGELIERMVRNMDNSRLRDSDLIPEGCSDDRPTRMIVPVQFETRMACGLVKGHAYSVTGLEEALYKGEKVKLVRLRNPWGQVEWNGSWSDSWKDWSYVDKDEKARLQHQVTEDGEFWMSYDDFIYHFTKLEICNLTADALESDKLQTWTVSVNEGRWVRGCSAGGCRNFPDTFWTNPQYRLKLLEEDDDPDDSEVICSFLVALMQKNRRKDRKLGANLFTIGFAIYEVPKEMHGNKQHLQKDFFLYNASKARSRTYINMREVSERFRLPPSEYVIVPSTYEPHQEGEFILRVFSEKRNLSEEVENTISVDRPVKKKKNKPIIFVSDRANSNKELGVDQETEEGKDNTSPDKQAKSPQLEPGNTDQESEEQRQFRNIFRQIAGDDMEICADELKNVLNRVVNKHKDLKTQGFTLESCRSMIALMDTDGSGRLNLQEFHHLWKKIKTWQKIFKHYDTDQSGTINSYEMRNAVKDAGFHLNNQLYDIITMRYADKYMNIDFDSFICCFVRLEGMFRAFNAFDKDGDGIIKLNVLEWLQLTMYA.

The tract at residues Met1 to Gly36 is disordered. The Calpain catalytic domain occupies Leu74 to Thr418. Catalysis depends on residues Cys129, His335, and Asn359. Residues Ala419–Asn587 are domain III. The tract at residues Thr588–Glu650 is linker. A disordered region spans residues Ile604–Gln652. A compositionally biased stretch (basic and acidic residues) spans Glu623 to Ala635. 4 EF-hand domains span residues Glu650–Lys684, Phe693–Lys726, Lys723–His758, and Val788–Ala822. The segment at Glu651–Ala822 is domain IV. Ca(2+) contacts are provided by Ala663, Asp666, Glu668, Glu673, Asp706, Asp708, Ser710, Arg712, Glu717, Asp736, Asp738, Ser740, Thr742, Glu747, Asp801, Asp803, Asp805, and Ile807.

This sequence belongs to the peptidase C2 family. In terms of assembly, homodimer; via EF-hand domain 4. Interacts with TTN/titin. Interacts with CMYA5; this interaction, which results in CMYA5 proteolysis, may protect CAPN3 from autolysis. Interacts with SIMC1. Interacts with UTP25; the interaction is required for CAPN3 translocation to the nucleolus. In terms of tissue distribution, skeletal muscle.

Its subcellular location is the cytoplasm. The protein resides in the nucleus. It is found in the nucleolus. It catalyses the reaction Broad endopeptidase activity.. Activated by micromolar concentrations of calcium and inhibited by calpastatin. Functionally, calcium-regulated non-lysosomal thiol-protease. Proteolytically cleaves CTBP1. Mediates, with UTP25, the proteasome-independent degradation of p53/TP53. This chain is Calpain-3 (CAPN3), found in Bos taurus (Bovine).